We begin with the raw amino-acid sequence, 671 residues long: DNA ligase (671 aa).

NAD(+)-binding positions include 36–40 (DHVYD), 85–86 (SM), and Glu115. Lys117 functions as the N6-AMP-lysine intermediate in the catalytic mechanism. NAD(+) is bound by residues Arg138, Glu172, Lys287, and Lys311. 4 residues coordinate Zn(2+): Cys405, Cys408, Cys423, and Cys428. Residues 588–671 (AADNFFKGKT…SKIEEKDTEK (84 aa)) enclose the BRCT domain.

Belongs to the NAD-dependent DNA ligase family. LigA subfamily. Mg(2+) is required as a cofactor. Mn(2+) serves as cofactor.

The enzyme catalyses NAD(+) + (deoxyribonucleotide)n-3'-hydroxyl + 5'-phospho-(deoxyribonucleotide)m = (deoxyribonucleotide)n+m + AMP + beta-nicotinamide D-nucleotide.. In terms of biological role, DNA ligase that catalyzes the formation of phosphodiester linkages between 5'-phosphoryl and 3'-hydroxyl groups in double-stranded DNA using NAD as a coenzyme and as the energy source for the reaction. It is essential for DNA replication and repair of damaged DNA. The polypeptide is DNA ligase (Lactobacillus delbrueckii subsp. bulgaricus (strain ATCC 11842 / DSM 20081 / BCRC 10696 / JCM 1002 / NBRC 13953 / NCIMB 11778 / NCTC 12712 / WDCM 00102 / Lb 14)).